Consider the following 298-residue polypeptide: Probable 2-(5''-triphosphoribosyl)-3'-dephosphocoenzyme-A synthase 2 (298 aa).

The protein belongs to the CitG/MdcB family.

It carries out the reaction 3'-dephospho-CoA + ATP = 2'-(5''-triphospho-alpha-D-ribosyl)-3'-dephospho-CoA + adenine. This is Probable 2-(5''-triphosphoribosyl)-3'-dephosphocoenzyme-A synthase 2 from Salmonella typhi.